A 186-amino-acid chain; its full sequence is Protein FAM219A (186 aa).

Disordered regions lie at residues 1-47 (MMEE…NYKP) and 59-132 (ELAR…GYSS). The segment covering 67 to 81 (KNGTVGSPVNQQPKK) has biased composition (polar residues). Over residues 123–132 (SRYSSSGYSS) the composition is skewed to low complexity.

Belongs to the FAM219 family.

The sequence is that of Protein FAM219A (fam219a) from Danio rerio (Zebrafish).